We begin with the raw amino-acid sequence, 100 residues long: Non-histone chromosomal protein HMG-14 (100 aa).

The segment at 1–100 (MPKRKVSSAE…EAGEKEAKSD (100 aa)) is disordered. Ser-7 carries the ADP-ribosylserine modification. Phosphoserine is present on Ser-8. Position 14 is an N6-acetyllysine (Lys-14). Ser-21 carries the phosphoserine; by RPS6KA5 modification. Ser-25 is subject to ADP-ribosylserine; alternate. At Ser-25 the chain carries Phosphoserine; alternate; by RPS6KA5. Lys-27 bears the N6-acetyllysine mark. 2 stretches are compositionally biased toward basic and acidic residues: residues 30–50 (AKVE…DKKV) and 69–85 (ETKE…KTEE). At Thr-81 the chain carries Phosphothreonine. Residue Lys-82 is modified to N6-acetyllysine. Ser-86, Ser-89, and Ser-99 each carry phosphoserine.

As to quaternary structure, interacts with transcriptional regulator SEHBP. Phosphorylation on Ser-21 and Ser-25 weakens binding to nucleosomes and increases the rate of H3 phosphorylation. Phosphorylation favors cytoplasmic localization.

The protein resides in the nucleus. It is found in the cytoplasm. In terms of biological role, binds to the inner side of the nucleosomal DNA thus altering the interaction between the DNA and the histone octamer. May be involved in the process which maintains transcribable genes in a unique chromatin conformation. Inhibits the phosphorylation of nucleosomal histones H3 and H2A by RPS6KA5/MSK1 and RPS6KA3/RSK2. The sequence is that of Non-histone chromosomal protein HMG-14 (HMGN1) from Homo sapiens (Human).